A 348-amino-acid polypeptide reads, in one-letter code: Protein DMR6-LIKE OXYGENASE 2 (348 aa).

In terms of domain architecture, Fe2OG dioxygenase spans lysine 194–proline 294. The Fe cation site is built by histidine 219, aspartate 221, and histidine 275. Arginine 285 contributes to the 2-oxoglutarate binding site.

It belongs to the iron/ascorbate-dependent oxidoreductase family. It depends on Fe(2+) as a cofactor.

The catalysed reaction is salicylate + NADH + O2 + H(+) = 2,3-dihydroxybenzoate + NAD(+) + H2O. Functionally, converts salicylic acid (SA) to 2,3-dihydroxybenzoic acid (2,3-DHBA). Negative regulator of defense against Hyaloperonospora arabidopsidis. (Microbial infection) Confers susceptibility to the downy mildew pathogen Hyaloperonospora arabidopsidis. This is Protein DMR6-LIKE OXYGENASE 2 from Arabidopsis thaliana (Mouse-ear cress).